A 352-amino-acid polypeptide reads, in one-letter code: Thiosulfate transporter TsuA (352 aa).

A helical membrane pass occupies residues 1–21; that stretch reads MFSMILSGLICGALLGFVMQR. The Cytoplasmic segment spans residues 22 to 44; sequence GRFCLTGGFRDMYIVKNNRMFYA. The chain crosses the membrane as a helical span at residues 45 to 65; that stretch reads LLIAISVQSVGVFALIQAGLL. Over 66 to 70 the chain is Periplasmic; the sequence is TYEAG. The chain crosses the membrane as a helical span at residues 71 to 91; that stretch reads AFPWLGTVIGGYIFGLGIVLA. Over 92–102 the chain is Cytoplasmic; that stretch reads GGCATGTWYRA. A helical membrane pass occupies residues 103–123; it reads GEGLIGSWIALFTYMVMSAVM. At 124–148 the chain is on the periplasmic side; that stretch reads RSPHASGLNQTLQHYSTEHNSIAET. A helical membrane pass occupies residues 149 to 169; sequence FNLSVWPLVAVLLVITLWVVM. Topologically, residues 170-197 are cytoplasmic; sequence KELKKPKLKVATLPPRRTGIAHILFEKR. The helical transmembrane segment at 198 to 218 threads the bilayer; the sequence is WHPFVTAVLIGLIALLAWPLS. At 219–247 the chain is on the periplasmic side; the sequence is EATGRMFGLGITSPTANILQFLVAGDMKY. The helical transmembrane segment at 248–268 threads the bilayer; the sequence is INWGVFLVLGIFVGSFIAAKA. Residues 269-289 are Cytoplasmic-facing; the sequence is SREFRVRAADAQTTLRSGLGG. The helical transmembrane segment at 290–310 threads the bilayer; that stretch reads VLMGFGASIAGGCSIGNGLVM. Topologically, residues 311–317 are periplasmic; it reads TAMMTWQ. A helical membrane pass occupies residues 318–338; that stretch reads GWIGLVFMILGVWTASWLVYV. Residues 339–352 are Cytoplasmic-facing; that stretch reads RPQRKARLATAAAN.

This sequence belongs to the TsuA/YedE (TC 9.B.102) family.

The protein localises to the cell inner membrane. The catalysed reaction is thiosulfate(in) = thiosulfate(out). Its function is as follows. Mediates thiosulfate uptake. This is Thiosulfate transporter TsuA from Escherichia coli (strain K12).